The sequence spans 474 residues: MNTAPFKLEADFASALPTMAAPWQGEESPNPELVILNDDLAYSLGLDPTWLRTPEGVQFLLGRNPEPLTKAVAQAYSGHQFGQFVASLGDGRALLLGEARSADGVLHDIHLKGSGRTQFSRGADGRAVLGPVLREYIISEAMHALGVPTTRSLAVISTGRKIQRGSVAPGAVLVRVATSLIRVGSFQYSNISGGIELSQHLANYTITRHFPSLVAELSAPTPATYVSLFKAILQRQADTVGKWTRLGFVHGALNTDNTLISGETVDYGPCAFMERYRGDAKFSSIDTYGRYKFENQPMILGWNMARLVETLLPLLGATPDEGMTAAQEALGEFDDLCEQAIRKEFATALGLDESDTGTVEQFRELLYLHNPDITTLLRSLTDNTAPPSGFEAFVHDWKTQDPDFEAMQAVNPLFIPRNHLVEAALADAIVGNLEKFHELLAAVTNPFDPTAGPDELRLPSEEGFEEDYMTFCGT.

Positions 89, 91, 92, 112, 124, 125, 175, and 182 each coordinate ATP. Residue Asp256 is the Proton acceptor of the active site. Mg(2+) contacts are provided by Asn257 and Asp266. Asp266 contacts ATP.

It belongs to the SELO family. Mg(2+) is required as a cofactor. The cofactor is Mn(2+).

It catalyses the reaction L-seryl-[protein] + ATP = 3-O-(5'-adenylyl)-L-seryl-[protein] + diphosphate. The enzyme catalyses L-threonyl-[protein] + ATP = 3-O-(5'-adenylyl)-L-threonyl-[protein] + diphosphate. The catalysed reaction is L-tyrosyl-[protein] + ATP = O-(5'-adenylyl)-L-tyrosyl-[protein] + diphosphate. It carries out the reaction L-histidyl-[protein] + UTP = N(tele)-(5'-uridylyl)-L-histidyl-[protein] + diphosphate. It catalyses the reaction L-seryl-[protein] + UTP = O-(5'-uridylyl)-L-seryl-[protein] + diphosphate. The enzyme catalyses L-tyrosyl-[protein] + UTP = O-(5'-uridylyl)-L-tyrosyl-[protein] + diphosphate. In terms of biological role, nucleotidyltransferase involved in the post-translational modification of proteins. It can catalyze the addition of adenosine monophosphate (AMP) or uridine monophosphate (UMP) to a protein, resulting in modifications known as AMPylation and UMPylation. The polypeptide is Protein nucleotidyltransferase YdiU (Corynebacterium glutamicum (strain R)).